Reading from the N-terminus, the 59-residue chain is uncharacterized protein (59 aa).

2 stretches are compositionally biased toward basic and acidic residues: residues 1-23 (MAEH…DAGR) and 36-45 (DPQRASEAGK). The interval 1 to 59 (MAEHRGGSGNFAEDREKASDAGRKGGQHSGGNFKNDPQRASEAGKKGGQQSGGNKSGKS) is disordered. Positions 46 to 59 (KGGQQSGGNKSGKS) are enriched in gly residues.

Belongs to the con-10 family.

This is an uncharacterized protein from Escherichia coli (strain K12).